The chain runs to 183 residues: Calcium-binding protein M (183 aa).

Residue glycine 2 is the site of N-myristoyl glycine attachment. EF-hand domains follow at residues 25–60 (EEVANIYGEFKKFDKDGNGSFDRKEFVLFFKSKLPN), 61–96 (YPEDNLNKLFDAFDSDKSNTIDFKELTVALSIIGKG), 97–132 (SAEDKLKVLFDIYDKDKSGILEKKEVDEMIALMKNV), and 142–177 (DIELFIVKLFEKIDKDKNNLISREEFLTEGARSPSL). Ca(2+)-binding residues include aspartate 74, aspartate 76, serine 78, threonine 80, glutamate 85, aspartate 110, aspartate 112, serine 114, glutamate 121, aspartate 155, aspartate 157, asparagine 159, and glutamate 166.

The protein belongs to the recoverin family.

The polypeptide is Calcium-binding protein M (cbpM) (Dictyostelium discoideum (Social amoeba)).